Consider the following 640-residue polypeptide: Chaperone protein DnaK (640 aa).

The residue at position 198 (T198) is a Phosphothreonine; by autocatalysis. The tract at residues 600 to 640 (KTQGAGAEGGEQPHGEQEAGGAAKGEKVVDADFEEVKDDKK) is disordered. Residues 630–640 (ADFEEVKDDKK) show a composition bias toward acidic residues.

This sequence belongs to the heat shock protein 70 family.

Acts as a chaperone. This Citrifermentans bemidjiense (strain ATCC BAA-1014 / DSM 16622 / JCM 12645 / Bem) (Geobacter bemidjiensis) protein is Chaperone protein DnaK.